The following is a 90-amino-acid chain: Small ribosomal subunit protein bS20 (90 aa).

Residues 1–21 (MANHKSALKRVRQTKKRTERN) form a disordered region.

This sequence belongs to the bacterial ribosomal protein bS20 family.

Functionally, binds directly to 16S ribosomal RNA. This Nitratiruptor sp. (strain SB155-2) protein is Small ribosomal subunit protein bS20.